We begin with the raw amino-acid sequence, 266 residues long: U2 small nuclear ribonucleoprotein A' (266 aa).

4 LRR repeats span residues 30–51 (ILRN…NHLA), 53–74 (PTHI…HHRD), 75–95 (DIET…ALLP), and 97–118 (KLKS…IPLS). The 39-residue stretch at 132–170 (NPICHLSEYRQRILALVPSLEVLDFKLVSQAEKAQAVKD) folds into the LRRCT domain.

The protein belongs to the U2 small nuclear ribonucleoprotein A family. As to quaternary structure, associated with the spliceosome.

The protein localises to the nucleus. Involved in pre-mRNA splicing. The chain is U2 small nuclear ribonucleoprotein A' (LEA1) from Candida glabrata (strain ATCC 2001 / BCRC 20586 / JCM 3761 / NBRC 0622 / NRRL Y-65 / CBS 138) (Yeast).